A 390-amino-acid polypeptide reads, in one-letter code: Caveolae-associated protein 1 (390 aa).

N-acetylmethionine is present on methionine 1. The segment at 1–40 (MEDPTLYIVERPLPGYPDAEAPEPSSAGAQAAEEPSGAGS) is disordered. A required for homotrimerization and for interaction with CAVIN2 and CAVIN3 region spans residues 1–98 (MEDPTLYIVE…IQGELSKLGK (98 aa)). The segment covering 22-40 (PEPSSAGAQAAEEPSGAGS) has biased composition (low complexity). Phosphoserine occurs at positions 36, 40, and 46. The nuclear export signal stretch occupies residues 52 to 62 (VLVLSLLDKII). A leucine-zipper 1 region spans residues 53-75 (LVLSLLDKIIGAVDQIQLTQAQL). Residue lysine 116 forms a Glycyl lysine isopeptide (Lys-Gly) (interchain with G-Cter in SUMO2) linkage. Residue serine 118 is modified to Phosphoserine. Lysine 122 participates in a covalent cross-link: Glycyl lysine isopeptide (Lys-Gly) (interchain with G-Cter in SUMO2). The tract at residues 136–152 (KKLEVNEAELLRRRNFK) is nuclear localization signal. Residue tyrosine 156 is modified to Phosphotyrosine. Lysine 161 is covalently cross-linked (Glycyl lysine isopeptide (Lys-Gly) (interchain with G-Cter in SUMO1); alternate). Lysine 161 is covalently cross-linked (Glycyl lysine isopeptide (Lys-Gly) (interchain with G-Cter in SUMO2); alternate). A Glycyl lysine isopeptide (Lys-Gly) (interchain with G-Cter in SUMO2) cross-link involves residue lysine 165. Residues 166 to 186 (LSISKSLKESEALPEKEGEEL) are leucine-zipper 2. Residues serine 167 and serine 169 each carry the phosphoserine modification. A Glycyl lysine isopeptide (Lys-Gly) (interchain with G-Cter in SUMO2) cross-link involves residue lysine 170. Serine 171 and serine 175 each carry phosphoserine. Over residues 172–181 (LKESEALPEK) the composition is skewed to basic and acidic residues. The tract at residues 172 to 201 (LKESEALPEKEGEELGEGERPEEDAAALEL) is disordered. Residues 182–201 (EGEELGEGERPEEDAAALEL) are compositionally biased toward acidic residues. Residues 199–282 (LELSSDEAVE…RMNKLGTRLV (84 aa)) adopt a coiled-coil conformation. Phosphoserine occurs at positions 202 and 203. Residues 233–249 (KKAFSKEKMEKTKVRTR) are nuclear localization signal. The interval 257-297 (LKTKENLEKTRHTLEKRMNKLGTRLVPAERREKLKTSRDKL) is leucine-zipper 3. The residue at position 300 (serine 300) is a Phosphoserine. Threonine 302 is subject to Phosphothreonine. At tyrosine 308 the chain carries Phosphotyrosine. Lysine 326 is covalently cross-linked (Glycyl lysine isopeptide (Lys-Gly) (interchain with G-Cter in SUMO2)). Positions 344 to 366 (VGADDDEGGAERGEAGDLRRGSS) are disordered. The span at 352–365 (GAERGEAGDLRRGS) shows a compositional bias: basic and acidic residues. Residues serine 365, serine 366, serine 379, serine 387, and serine 389 each carry the phosphoserine modification.

The protein belongs to the CAVIN family. In terms of assembly, component of the CAVIN complex composed of CAVIN1, CAVIN2, CAVIN3 and CAVIN4. Homotrimer. Interacts with TTF1. Interacts with RNA polymerase I subunit POLR1A/RPA1. Binds the 3' end of pre-rRNA. Interacts with transcription factor ZNF148. Interacts with LIPE in the adipocyte cytoplasm. Interacts with CAV1 and CAVIN3. Interacts with CAVIN2. Interacts with CAVIN4 and CAV3. Post-translationally, phosphorylated. Present in active and inactive forms. Changes in phosphorylation pattern may alter activity. Phosphorylation at Tyr-156 is essential for its functionin the regulation of ribosomal transcriptional activity. In terms of processing, five truncated forms are found in the caveolae. These are thought to be the result of proteolysis and may be phosphorylation-dependent. Monoubiquitinated.

It localises to the membrane. Its subcellular location is the caveola. It is found in the cell membrane. The protein localises to the microsome. The protein resides in the endoplasmic reticulum. It localises to the cytoplasm. Its subcellular location is the cytosol. It is found in the mitochondrion. The protein localises to the nucleus. Functionally, plays an important role in caveolae formation and organization. Essential for the formation of caveolae in all tissues. Core component of the CAVIN complex which is essential for recruitment of the complex to the caveolae in presence of calveolin-1 (CAV1). Essential for normal oligomerization of CAV1. Promotes ribosomal transcriptional activity in response to metabolic challenges in the adipocytes and plays an important role in the formation of the ribosomal transcriptional loop. Dissociates transcription complexes paused by DNA-bound TTF1, thereby releasing both RNA polymerase I and pre-RNA from the template. The caveolae biogenesis pathway is required for the secretion of proteins such as GASK1A. In Homo sapiens (Human), this protein is Caveolae-associated protein 1.